The following is a 477-amino-acid chain: Trigger factor (477 aa).

The region spanning 174 to 261 is the PPIase FKBP-type domain; sequence GDIAVVSFKG…LKDLKEKELP (88 aa). A disordered region spans residues 435–477; that stretch reads VNEKTTKTSKATKTSKTTKATKTATKTTKTTKTTKTQNKKEKK. Positions 442–470 are enriched in low complexity; sequence TSKATKTSKTTKATKTATKTTKTTKTTKT.

Belongs to the FKBP-type PPIase family. Tig subfamily.

The protein resides in the cytoplasm. It carries out the reaction [protein]-peptidylproline (omega=180) = [protein]-peptidylproline (omega=0). Its function is as follows. Involved in protein export. Acts as a chaperone by maintaining the newly synthesized protein in an open conformation. Functions as a peptidyl-prolyl cis-trans isomerase. The protein is Trigger factor of Prochlorococcus marinus (strain MIT 9301).